A 276-amino-acid polypeptide reads, in one-letter code: Pyridinium-3,5-bisthiocarboxylic acid mononucleotide synthase (276 aa).

Cys-176 (nucleophile and sulfur donor) is an active-site residue. A 2,3-didehydroalanine (Cys) modification is found at Cys-176.

This sequence belongs to the LarE family.

It catalyses the reaction pyridinium-3,5-dicarboxylate mononucleotide + [LarE protein]-L-cysteine + ATP = [LarE protein]-dehydroalanine + pyridinium-3-carboxylate-5-thiocarboxylate mononucleotide + AMP + diphosphate + H(+). The catalysed reaction is [LarE protein]-L-cysteine + pyridinium-3-carboxylate-5-thiocarboxylate mononucleotide + ATP = pyridinium-3,5-bisthiocarboxylate mononucleotide + [LarE protein]-dehydroalanine + AMP + diphosphate + H(+). Involved in the biosynthesis of a nickel-pincer cofactor ((SCS)Ni(II) pincer complex). Catalyzes the ATP-dependent incorporation of two sulfur atoms in pyridinium-3,5-biscarboxylic acid mononucleotide (P2CMN) to yield pyridinium-3,5-bisthiocarboxylic acid mononucleotide (P2TMN). The source of sulfur is the enzyme itself: Cys-176 of LarE is the sulfur donor, thereby being converted into dehydroalanine, and is not regenerated in vivo. Thus, two molecules of LarE undergo sacrificial sulfur transfer to create one P2TMN. Binds nickel. Is required for the activation of the lactate racemase LarA. May also be involved in the activation of other nickel-pincer cofactor-dependent enzymes. This is Pyridinium-3,5-bisthiocarboxylic acid mononucleotide synthase from Lactiplantibacillus plantarum (strain ATCC BAA-793 / NCIMB 8826 / WCFS1) (Lactobacillus plantarum).